Consider the following 701-residue polypeptide: Polyribonucleotide nucleotidyltransferase (701 aa).

Mg(2+) contacts are provided by D487 and D493. The KH domain maps to 554-613 (PTMLQMKIDSDKIRDVIGKGGATIRGICEETKASIDIEDDGSVKIYGETKEAAEAAKLRV). In terms of domain architecture, S1 motif spans 623–691 (GKIYVGKVER…NRGRIKLSIK (69 aa)).

It belongs to the polyribonucleotide nucleotidyltransferase family. Component of the RNA degradosome, which is a multiprotein complex involved in RNA processing and mRNA degradation. Mg(2+) serves as cofactor.

The protein resides in the cytoplasm. It catalyses the reaction RNA(n+1) + phosphate = RNA(n) + a ribonucleoside 5'-diphosphate. In terms of biological role, involved in mRNA degradation. Catalyzes the phosphorolysis of single-stranded polyribonucleotides processively in the 3'- to 5'-direction. This Pseudomonas aeruginosa (strain LESB58) protein is Polyribonucleotide nucleotidyltransferase.